The chain runs to 552 residues: Kumamolisin (552 aa).

Residues 1 to 17 (MSDMEKPWKEEEKREVL) are compositionally biased toward basic and acidic residues. Residues 1–34 (MSDMEKPWKEEEKREVLAGHARRQAPQAVDKGPV) are disordered. The Peptidase S53 domain occupies 193–546 (AYTPLDVAQA…IRLLQALLPS (354 aa)). Catalysis depends on charge relay system residues E266, D270, and S466. D504, I505, G522, G524, and D526 together coordinate Ca(2+).

As to quaternary structure, forms monomeric and dimeric crystals. Ca(2+) is required as a cofactor. Post-translationally, autocatalytically processed.

The protein resides in the secreted. The enzyme catalyses The enzyme preferentially hydrolyzes peptides having an Ala or Pro residue at P2 position and prefers such charged amino acid residues as Glu or Arg at the P2' position. In the oxidized insulin B chain, kumamolysin preferentially cleaves between Leu(15) and Tyr(16).. Its activity is regulated as follows. Inactivated at 22.4 and 37 degrees Celsius, but not at 60 degrees Celsius, by aldehyde-type inhibitors such as acetyl-Ile-Ala-Phe-CHO and acetyl-Ile-Pro-Phe-CHO. Insensitive to the known carboxyl proteinase inhibitors pepstatin, diazoacetyl-DL-norleucine methyl ester (DAN) and 1,2-epoxy-3-(p-nitrophenoxy)propane (EPNP). Not inhibited by Ala-Ala-Phe-chloromethylketone, an inhibitor of the human tripeptidyl-peptidase 1. In terms of biological role, thermostable pepstatin-insensitive serine-carboxyl proteinase. Preferentially hydrolyzes synthetic peptides having an Ala or Pro residue at the P2 position and charged amino acids such as Glu or Arg at the P2' position. In vitro, specifically hydrolyzes the Leu-15-Tyr-16 peptide bond in oxidized insulin B-chain. Additional cleavage of oxidized insulin B-chain at Phe-25-Tyr-26 is detected at a considerably lower rate. Can hydrolyze collagen and the chromogenic substrate azocoll. Shows lower activity with albumin and casein. Shows very weak tripeptidyl peptidase activity. This is Kumamolisin from Bacillus sp. (strain MN-32).